The following is a 471-amino-acid chain: GDP-fucose protein O-fucosyltransferase 3 (471 aa).

Topologically, residues Met1–Lys8 are cytoplasmic. A helical; Signal-anchor for type II membrane protein transmembrane segment spans residues Phe9–Val29. The Lumenal segment spans residues Glu30–Gln471. 4 N-linked (GlcNAc...) asparagine glycosylation sites follow: Asn102, Asn122, Asn160, and Asn310. Cys381 and Cys384 are joined by a disulfide. N-linked (GlcNAc...) asparagine glycosylation occurs at Asn457.

This sequence belongs to the glycosyltransferase 10 family.

It localises to the endoplasmic reticulum membrane. It carries out the reaction L-threonyl-[protein] + GDP-beta-L-fucose = 3-O-(alpha-L-fucosyl)-L-threonyl-[protein] + GDP + H(+). It catalyses the reaction L-seryl-[protein] + GDP-beta-L-fucose = 3-O-(alpha-L-fucosyl)-L-seryl-[protein] + GDP + H(+). The protein operates within protein modification; protein glycosylation. In terms of biological role, protein O-fucosyltransferase that specifically catalyzes O-fucosylation of serine or threonine residues in EMI domains of target proteins. Attaches fucose through an O-glycosidic linkage. O-fucosylation of EMI domain-containing proteins may be required for facilitating protein folding and secretion. This Xenopus tropicalis (Western clawed frog) protein is GDP-fucose protein O-fucosyltransferase 3 (fut10).